The sequence spans 577 residues: Urease subunit alpha (577 aa).

Positions 136–577 (GAIDCHVHLI…LPMAQRYFLF (442 aa)) constitute a Urease domain. Ni(2+) contacts are provided by His141, His143, and Lys224. Position 224 is an N6-carboxylysine (Lys224). His226 contacts substrate. Ni(2+) is bound by residues His253 and His279. His327 serves as the catalytic Proton donor. Asp367 serves as a coordination point for Ni(2+).

The protein belongs to the metallo-dependent hydrolases superfamily. Urease alpha subunit family. As to quaternary structure, heterotrimer of UreA (gamma), UreB (beta) and UreC (alpha) subunits. Three heterotrimers associate to form the active enzyme. The cofactor is Ni cation. Carboxylation allows a single lysine to coordinate two nickel ions.

Its subcellular location is the cytoplasm. It carries out the reaction urea + 2 H2O + H(+) = hydrogencarbonate + 2 NH4(+). It participates in nitrogen metabolism; urea degradation; CO(2) and NH(3) from urea (urease route): step 1/1. This chain is Urease subunit alpha, found in Mycobacterium ulcerans (strain Agy99).